The following is a 604-amino-acid chain: MNIVQNSIFLSNLLRSSPVFELKYDHSCELYRMSTYSTFPAGVPVSERSLARAGFYYTGAKDRVRCFCCGLMLDNWKAGDSPTGKHRNLYPSCSFIQNLSAVSTVGAASQPPAPLSEARSTHAQSPGLERSSYFSASYSSFPVDPVDFRPSPAMSPWRAGPSCVTMKSEEDRLCTFQGWPLAFPLPSALARAGFYYVGPGDRVACFACGGKLSNWEPDDDALSEHLRHFPDCPFVEGQLQATVRYTASNLSMQTLAARSRTFCNWPPRAPVHPEQLASAGFYYMGHSDDVKCFCCDGGLRCWESGDDPWVEHAKWFPRCEYLIRIKGQEFISQIQASYPHLLEQLLSTSDNTEDENTESPIVHFGPGEYHSEDAVMMNTPVVMAALEMGFSRSLVRQTVQSKILSTGENYRTVNEIVSDLLHVEDEIREEEKERAAENRESDDVSLIRKNKMVLFQHLTYVLPILDSLLMAGVLNEQEHSSIKQKARTSLQARELIDTVLVKGSSAVTIFKNSLQEIDPMLYKRFFVQQDRKYIPTEDISDLPVEEQLRRLQEERTCKVCMDKEVSIVFIPCGHLVVCRDCAPSLRKCPICRGTVRGTVRTFLS.

One copy of the BIR 1 repeat lies at 29-96 (ELYRMSTYST…RNLYPSCSFI (68 aa)). Arg-130 is modified (omega-N-methylarginine). Phosphoserine is present on Ser-140. BIR repeat units follow at residues 169–235 (EEDR…CPFV) and 255–322 (LAAR…CEYL). Residues Cys-292, Cys-295, His-312, and Cys-319 each coordinate Zn(2+). One can recognise a CARD domain in the interval 439–529 (RESDDVSLIR…MLYKRFFVQQ (91 aa)). The segment at 557-592 (CKVCMDKEVSIVFIPCGHLVVCRDCAPSLRKCPICR) adopts an RING-type zinc-finger fold.

The protein belongs to the IAP family. Interacts with PRSS25; the interaction inhibits apoptotic suppressor activity. The BIR motifs region interacts with TNF receptor associated factors 1 and 2 (TRAF1 and TRAF2) to form a heteromeric complex, which is then recruited to the tumor necrosis factor receptor 2 (TNFR2). Interaction with TRAF2 is required for ubiquitination of IKBKE, degradation of NFKBIA and activation of NF-kappa-B. Interacts with RIP1, RIP2, RIP3, RIP4 and USP19. Post-translationally, auto-ubiquitinated and degraded by the proteasome in apoptotic cells.

The protein localises to the cytoplasm. The protein resides in the nucleus. It catalyses the reaction S-ubiquitinyl-[E2 ubiquitin-conjugating enzyme]-L-cysteine + [acceptor protein]-L-lysine = [E2 ubiquitin-conjugating enzyme]-L-cysteine + N(6)-ubiquitinyl-[acceptor protein]-L-lysine.. Its activity is regulated as follows. USP19 regulates the stability of BIRC3/c-IAP2 by preventing its ubiquitination. Multi-functional protein which regulates not only caspases and apoptosis, but also modulates inflammatory signaling and immunity, mitogenic kinase signaling and cell proliferation, as well as cell invasion and metastasis. Acts as an E3 ubiquitin-protein ligase regulating NF-kappa-B signaling and regulates both canonical and non-canonical NF-kappa-B signaling by acting in opposite directions: acts as a positive regulator of the canonical pathway and suppresses constitutive activation of non-canonical NF-kappa-B signaling. The target proteins for its E3 ubiquitin-protein ligase activity include: RIPK1, RIPK2, RIPK3, RIPK4, CASP3, CASP7, CASP8, IKBKE, TRAF1, and BCL10. Acts as an important regulator of innate immune signaling via regulation of Toll-like receptors (TLRs), Nodlike receptors (NLRs) and RIG-I like receptors (RLRs), collectively referred to as pattern recognition receptors (PRRs). Protects cells from spontaneous formation of the ripoptosome, a large multi-protein complex that has the capability to kill cancer cells in a caspase-dependent and caspase-independent manner. Suppresses ripoptosome formation by ubiquitinating RIPK1 and CASP8. This is Baculoviral IAP repeat-containing protein 3 (BIRC3) from Canis lupus familiaris (Dog).